We begin with the raw amino-acid sequence, 495 residues long: Telomere-binding protein subunit alpha (495 aa).

Residues 1–13 (MSTAAKQNRSTSR) are compositionally biased toward polar residues. The tract at residues 1–31 (MSTAAKQNRSTSRVSKKKTAAPKEGAAKKSD) is disordered.

This sequence belongs to the telombin family. In terms of assembly, heterodimer of an alpha and a beta subunit.

It is found in the nucleus. The protein localises to the chromosome. It localises to the telomere. Functionally, may function as protective capping of the single-stranded telomeric overhang. May also participate in telomere length regulation during DNA replication. Binds specifically to the T4G4-containing extension on the 3'strand and protects this region of the telomere from nuclease digestion and chemical modification. The chain is Telomere-binding protein subunit alpha (MAC-56A) from Sterkiella nova (Ciliate).